Here is a 230-residue protein sequence, read N- to C-terminus: 7-cyano-7-deazaguanine synthase (230 aa).

16 to 26 contributes to the ATP binding site; sequence LSGGLDSMVSG. 4 residues coordinate Zn(2+): Cys195, Cys205, Cys208, and Cys211.

It belongs to the QueC family. Zn(2+) is required as a cofactor.

It catalyses the reaction 7-carboxy-7-deazaguanine + NH4(+) + ATP = 7-cyano-7-deazaguanine + ADP + phosphate + H2O + H(+). The protein operates within purine metabolism; 7-cyano-7-deazaguanine biosynthesis. Functionally, catalyzes the ATP-dependent conversion of 7-carboxy-7-deazaguanine (CDG) to 7-cyano-7-deazaguanine (preQ(0)). This Rhizorhabdus wittichii (strain DSM 6014 / CCUG 31198 / JCM 15750 / NBRC 105917 / EY 4224 / RW1) (Sphingomonas wittichii) protein is 7-cyano-7-deazaguanine synthase.